A 644-amino-acid polypeptide reads, in one-letter code: Heat shock protein SSC3, mitochondrial (644 aa).

This sequence belongs to the heat shock protein 70 family.

The protein resides in the mitochondrion matrix. The protein localises to the mitochondrion nucleoid. Functionally, plays a role in facilitating the assembly of some protein complexes inside the mitochondria. It may initiate the events that lead to refolding of imported precursors in the matrix space. The protein is Heat shock protein SSC3, mitochondrial (ECM10) of Saccharomyces cerevisiae (strain ATCC 204508 / S288c) (Baker's yeast).